Consider the following 100-residue polypeptide: Small ribosomal subunit protein uS14c (100 aa).

This sequence belongs to the universal ribosomal protein uS14 family. Part of the 30S ribosomal subunit.

The protein resides in the plastid. Its subcellular location is the chloroplast. Its function is as follows. Binds 16S rRNA, required for the assembly of 30S particles. This chain is Small ribosomal subunit protein uS14c, found in Populus alba (White poplar).